Consider the following 59-residue polypeptide: Conotoxin ViVA (59 aa).

The N-terminal stretch at 1–19 (MRCVPVFIILLLLIPSASS) is a signal peptide. The propeptide occupies 20 to 46 (AAVQPKTEKDDVPLASVHDSALRILSR). Glutamine 47 is subject to Pyrrolidone carboxylic acid. Disulfide bonds link cysteine 48–cysteine 55 and cysteine 49–cysteine 56. At isoleucine 58 the chain carries Isoleucine amide.

It belongs to the conotoxin T superfamily. In terms of tissue distribution, expressed by the venom duct.

The protein resides in the secreted. The chain is Conotoxin ViVA from Conus virgo (Virgin cone).